The chain runs to 291 residues: Insulin-like growth factor-binding protein 3 (291 aa).

The first 27 residues, 1–27 (MQRARPTLWAAALTLLVLLRGPPVARA), serve as a signal peptide directing secretion. The segment at 28–134 (GASSAGLGPV…AYLLPAPPAP (107 aa)) is IGF-binding. The region spanning 36–117 (PVVRCEPCDA…LDGRGLCVNA (82 aa)) is the IGFBP N-terminal domain. Disulfide bonds link Cys40-Cys67, Cys43-Cys69, Cys51-Cys70, Cys58-Cys73, Cys81-Cys94, and Cys88-Cys114. N-linked (GlcNAc...) (complex) asparagine glycosylation is found at Asn116 and Asn136. Disordered regions lie at residues 130–162 (APPAPGNASESEEDRSAGSVESPSVSSTHRVSD) and 189–211 (DYESQSTDTQNFSSESKRETEYG). Low complexity predominate over residues 146–156 (AGSVESPSVSS). Residue Ser148 is modified to Phosphoserine; by FAM20C. Residues 191–202 (ESQSTDTQNFSS) show a composition bias toward polar residues. Ser194 is subject to Phosphoserine; by CK2. N-linked (GlcNAc...) (complex) asparagine glycosylation is present at Asn199. Position 201 is a phosphoserine; by FAM20C (Ser201). Ser202 carries the phosphoserine; by CK2 modification. The Thyroglobulin type-1 domain maps to 210–285 (YGPCRREMED…TTKGKEDVHC (76 aa)). Cystine bridges form between Cys213-Cys240, Cys251-Cys262, and Cys264-Cys285.

As to quaternary structure, interacts with XLKD1. Binds IGF2 more than IGF1. Forms a ternary complex of about 140 to 150 kDa with IGF1 or IGF2 and a 85 kDa glycoprotein (ALS). Interacts with humanin; humanin competes with importin KPNB1 for binding to IGFBP3, blocking IGFBP3 nuclear import and IGFBP3-mediated apoptosis. Interacts with TMEM219. Interacts with RXRA; this interaction modulates the transcriptional activity of RXRA. Interacts with LRP1; this interaction mediates cell growth inhibition independent of IGF1. Phosphorylated by FAM20C in the extracellular medium. Phosphorylated by CK2; resulting in decreased nuclear localization. Expressed by most tissues. Present in plasma.

It localises to the secreted. It is found in the nucleus. In terms of biological role, multifunctional protein that plays a critical role in regulating the availability of IGFs such as IGF1 and IGF2 to their receptors and thereby regulates IGF-mediated cellular processes including proliferation, differentiation, and apoptosis in a cell-type specific manner. Also exhibits IGF-independent antiproliferative and apoptotic effects mediated by its receptor TMEM219/IGFBP-3R. Inhibits the positive effect of humanin on insulin sensitivity. Promotes testicular germ cell apoptosis. Acts via LRP-1/alpha2M receptor, also known as TGF-beta type V receptor, to mediate cell growth inhibition independent of IGF1. Mechanistically, induces serine-specific dephosphorylation of IRS1 or IRS2 upon ligation to its receptor, leading to the inhibitory cascade. In the nucleus, interacts with transcription factors such as retinoid X receptor-alpha/RXRA to regulate transcriptional signaling and apoptosis. The polypeptide is Insulin-like growth factor-binding protein 3 (IGFBP3) (Homo sapiens (Human)).